The primary structure comprises 334 residues: DNA-directed RNA polymerase subunit alpha (334 aa).

The alpha N-terminal domain (alpha-NTD) stretch occupies residues 1 to 232 (MVREEIAVST…IDLFIPFLHA (232 aa)). Residues 268–334 (GIALKCIFID…ILQKHFTIDC (67 aa)) form an alpha C-terminal domain (alpha-CTD) region.

The protein belongs to the RNA polymerase alpha chain family. In terms of assembly, in plastids the minimal PEP RNA polymerase catalytic core is composed of four subunits: alpha, beta, beta', and beta''. When a (nuclear-encoded) sigma factor is associated with the core the holoenzyme is formed, which can initiate transcription.

The protein resides in the plastid. Its subcellular location is the chloroplast. The enzyme catalyses RNA(n) + a ribonucleoside 5'-triphosphate = RNA(n+1) + diphosphate. Functionally, DNA-dependent RNA polymerase catalyzes the transcription of DNA into RNA using the four ribonucleoside triphosphates as substrates. This chain is DNA-directed RNA polymerase subunit alpha, found in Chloranthus spicatus (Chulantree).